The sequence spans 360 residues: Phospho-N-acetylmuramoyl-pentapeptide-transferase (360 aa).

10 helical membrane-spanning segments follow: residues 27 to 47 (IVSL…LIAW), 72 to 92 (PTMG…MWAY), 94 to 114 (SNPY…VGFI), 132 to 152 (WKYF…FAVG), 168 to 188 (IMPQ…VGTS), 199 to 219 (GLAI…AWAT), 235 to 255 (FAGE…GFLW), 263 to 283 (VFMG…IAVL), 288 to 308 (FLLL…ILQV), and 338 to 358 (VIVR…ATLK).

Belongs to the glycosyltransferase 4 family. MraY subfamily. It depends on Mg(2+) as a cofactor.

It is found in the cell inner membrane. It catalyses the reaction UDP-N-acetyl-alpha-D-muramoyl-L-alanyl-gamma-D-glutamyl-meso-2,6-diaminopimeloyl-D-alanyl-D-alanine + di-trans,octa-cis-undecaprenyl phosphate = di-trans,octa-cis-undecaprenyl diphospho-N-acetyl-alpha-D-muramoyl-L-alanyl-D-glutamyl-meso-2,6-diaminopimeloyl-D-alanyl-D-alanine + UMP. The protein operates within cell wall biogenesis; peptidoglycan biosynthesis. In terms of biological role, catalyzes the initial step of the lipid cycle reactions in the biosynthesis of the cell wall peptidoglycan: transfers peptidoglycan precursor phospho-MurNAc-pentapeptide from UDP-MurNAc-pentapeptide onto the lipid carrier undecaprenyl phosphate, yielding undecaprenyl-pyrophosphoryl-MurNAc-pentapeptide, known as lipid I. This is Phospho-N-acetylmuramoyl-pentapeptide-transferase from Sodalis glossinidius (strain morsitans).